We begin with the raw amino-acid sequence, 401 residues long: Acetate kinase (401 aa).

Residue Asn7 participates in Mg(2+) binding. Lys14 contributes to the ATP binding site. Arg91 is a substrate binding site. Residue Asp148 is the Proton donor/acceptor of the active site. ATP is bound by residues 208–212 (HLGNG), 283–285 (DFR), and 331–335 (GVGEN). Position 384 (Glu384) interacts with Mg(2+).

The protein belongs to the acetokinase family. As to quaternary structure, homodimer. Mg(2+) is required as a cofactor. Requires Mn(2+) as cofactor.

The protein resides in the cytoplasm. It catalyses the reaction acetate + ATP = acetyl phosphate + ADP. Its pathway is metabolic intermediate biosynthesis; acetyl-CoA biosynthesis; acetyl-CoA from acetate: step 1/2. Functionally, catalyzes the formation of acetyl phosphate from acetate and ATP. Can also catalyze the reverse reaction. The protein is Acetate kinase of Helicobacter hepaticus (strain ATCC 51449 / 3B1).